The following is a 334-amino-acid chain: L-lactate dehydrogenase B chain (334 aa).

Alanine 2 is subject to N-acetylalanine. The residue at position 7 (lysine 7) is an N6-acetyllysine. Residues 30 to 58 (GQVG…LEDK) and arginine 100 contribute to the NAD(+) site. Position 44 is a phosphoserine (serine 44). Lysine 58 is modified (N6-acetyllysine). Arginine 107 is a substrate binding site. N6-acetyllysine is present on lysine 119. An NAD(+)-binding site is contributed by asparagine 139. 2 residues coordinate substrate: asparagine 139 and arginine 170. The Proton acceptor role is filled by histidine 194. Tyrosine 240 bears the Phosphotyrosine mark. Residue threonine 249 participates in substrate binding. Lysine 329 carries the post-translational modification N6-acetyllysine.

Belongs to the LDH/MDH superfamily. LDH family. Homotetramer. Interacts with PTEN upstream reading frame protein MP31; the interaction leads to inhibition of mitochondrial lactate dehydrogenase activity, preventing conversion of lactate to pyruvate in mitochondria.

The protein resides in the cytoplasm. Its subcellular location is the mitochondrion inner membrane. The enzyme catalyses (S)-lactate + NAD(+) = pyruvate + NADH + H(+). It functions in the pathway fermentation; pyruvate fermentation to lactate; (S)-lactate from pyruvate: step 1/1. In terms of biological role, interconverts simultaneously and stereospecifically pyruvate and lactate with concomitant interconversion of NADH and NAD(+). The polypeptide is L-lactate dehydrogenase B chain (LDHB) (Sus scrofa (Pig)).